The sequence spans 367 residues: Holliday junction branch migration complex subunit RuvB (367 aa).

Residues 2–196 (TDEPLTDRPP…FGFTARLDFY (195 aa)) form a large ATPase domain (RuvB-L) region. Residues leucine 35, arginine 36, glycine 77, lysine 80, threonine 81, threonine 82, 143–145 (EDF), arginine 186, tyrosine 196, and arginine 233 contribute to the ATP site. Threonine 81 serves as a coordination point for Mg(2+). The segment at 197-267 (EPADLERIVH…VAQAALAVYE (71 aa)) is small ATPAse domain (RuvB-S). The tract at residues 270-367 (EHGLDRLDRA…IDRDAGEPTA (98 aa)) is head domain (RuvB-H). DNA is bound by residues arginine 325 and arginine 330.

Belongs to the RuvB family. In terms of assembly, homohexamer. Forms an RuvA(8)-RuvB(12)-Holliday junction (HJ) complex. HJ DNA is sandwiched between 2 RuvA tetramers; dsDNA enters through RuvA and exits via RuvB. An RuvB hexamer assembles on each DNA strand where it exits the tetramer. Each RuvB hexamer is contacted by two RuvA subunits (via domain III) on 2 adjacent RuvB subunits; this complex drives branch migration. In the full resolvosome a probable DNA-RuvA(4)-RuvB(12)-RuvC(2) complex forms which resolves the HJ.

It localises to the cytoplasm. The catalysed reaction is ATP + H2O = ADP + phosphate + H(+). Functionally, the RuvA-RuvB-RuvC complex processes Holliday junction (HJ) DNA during genetic recombination and DNA repair, while the RuvA-RuvB complex plays an important role in the rescue of blocked DNA replication forks via replication fork reversal (RFR). RuvA specifically binds to HJ cruciform DNA, conferring on it an open structure. The RuvB hexamer acts as an ATP-dependent pump, pulling dsDNA into and through the RuvAB complex. RuvB forms 2 homohexamers on either side of HJ DNA bound by 1 or 2 RuvA tetramers; 4 subunits per hexamer contact DNA at a time. Coordinated motions by a converter formed by DNA-disengaged RuvB subunits stimulates ATP hydrolysis and nucleotide exchange. Immobilization of the converter enables RuvB to convert the ATP-contained energy into a lever motion, pulling 2 nucleotides of DNA out of the RuvA tetramer per ATP hydrolyzed, thus driving DNA branch migration. The RuvB motors rotate together with the DNA substrate, which together with the progressing nucleotide cycle form the mechanistic basis for DNA recombination by continuous HJ branch migration. Branch migration allows RuvC to scan DNA until it finds its consensus sequence, where it cleaves and resolves cruciform DNA. The chain is Holliday junction branch migration complex subunit RuvB from Acidothermus cellulolyticus (strain ATCC 43068 / DSM 8971 / 11B).